A 303-amino-acid polypeptide reads, in one-letter code: Hemolysin E, chromosomal (303 aa).

Cysteines 87 and 285 form a disulfide. A helical membrane pass occupies residues 183–203 (AGVVAGPFGLIISYSIAAGVV).

Monomer and oligomer. In periplasm, it is present as a monomer, while in outer membrane vesicles, it oligomerizes to form a pore structure that is active. The pore is formed by a dodecamer. Post-translationally, in periplasm, it forms a disulfide bond between Cys-87 and Cys-285, which prevents the oligomerization. In outer membrane vesicles, the redox status prevents formation of the disulfide bond, leading to oligomerization and pore formation.

Its subcellular location is the secreted. It localises to the periplasm. The protein resides in the host cell membrane. In terms of biological role, toxin, which has some hemolytic activity towards mammalian cells. Acts by forming a pore-like structure upon contact with mammalian cells. The polypeptide is Hemolysin E, chromosomal (hlyE) (Escherichia coli (strain K12)).